We begin with the raw amino-acid sequence, 328 residues long: Formimidoylglutamase (328 aa).

Mn(2+) contacts are provided by His-133, Asp-159, His-161, Asp-163, Asp-253, and Asp-255.

The protein belongs to the arginase family. Requires Mn(2+) as cofactor.

The enzyme catalyses N-formimidoyl-L-glutamate + H2O = formamide + L-glutamate. It participates in amino-acid degradation; L-histidine degradation into L-glutamate; L-glutamate from N-formimidoyl-L-glutamate (hydrolase route): step 1/1. Catalyzes the conversion of N-formimidoyl-L-glutamate to L-glutamate and formamide. In Streptococcus pyogenes serotype M3 (strain ATCC BAA-595 / MGAS315), this protein is Formimidoylglutamase.